The following is a 324-amino-acid chain: T-cell acute lymphocytic leukemia protein 1 homolog (324 aa).

A disordered region spans residues 1–49 (MMEKLKSEQFPLSPSAEGCASPPRGDGDARGKQEGTTAETGEHRLPEEL). One can recognise a bHLH domain in the interval 185–237 (VRRIFTNSRERWRQQNVNGAFAELRKLIPTHPPDKKLSKNEILRLAMKYINFL). Residues 276-324 (SPNSSCGSLLDGDASPESFTEDQDSSVESRPSARGLHHSSLPLDGNAQR) form a disordered region.

As to expression, expressed in hemopoietic and endothelial lineages. Isoform beta emerges first, expressing in the entire anterior and posterior lateral mesoderm (ALM and PLM respectively), and in the ventral wall of the dorsal aorta, where definitive hemopoiesis begins. Isoform alpha expresses later as two pairs of stripes in the PLM and ALM, and becomes restricted to the intermediate cell mass (ICM) by the 18-somite stage. The ICM is the key site of primitive hemopoiesis, giving rise to the erythroid lineage. Also expressed in all stages of endocardial cell migration and in the developing midbrain, hindbrain and spinal cord. In adults, expressed in the main hemopoietic organs, namely the kidney (where isoform alpha is the predominant isoform) and the spleen. Also expressed in the liver, gill and gonads.

The protein resides in the nucleus. Functionally, transcription factor that plays a pivotal role in hemopoietic and endothelial development, acting synergistically with lmo2 and downstream of clo. Specifies mesodermal precursors to a hemangioblast cell fate. Hemangioblasts are bipotential precursors of blood and endothelium, and in the absence of hemopoietic induction cues such as gata1, tal1/scl-lmo2-induced hemangioblasts differentiate into endothelial cells. Isoform alpha and isoform beta are redundant for the initiation of primitive hemopoiesis but have distinct roles in the regulation of primitive erythroid differentiation and definitive hemopoietic stem cell specification, most likely due to differences in expression levels. Specification of definitive hemopoietic stem cells requires isoform beta. DNA binding is required for erythroid maturation, but not for its other hemopoietic functions. Endothelial roles include development of the dorsal aorta, the site of definitive hemopoiesis in the embryo. Required for angiogenesis but not angioblast specification. Has an additional role in endocardium formation during heart development. May play a role in central nervous system development. The sequence is that of T-cell acute lymphocytic leukemia protein 1 homolog from Danio rerio (Zebrafish).